The sequence spans 101 residues: Small ribosomal subunit protein uS14 (101 aa).

This sequence belongs to the universal ribosomal protein uS14 family. Part of the 30S ribosomal subunit. Contacts proteins S3 and S10.

Binds 16S rRNA, required for the assembly of 30S particles and may also be responsible for determining the conformation of the 16S rRNA at the A site. In Kocuria rhizophila (strain ATCC 9341 / DSM 348 / NBRC 103217 / DC2201), this protein is Small ribosomal subunit protein uS14.